The chain runs to 907 residues: Translation initiation factor IF-2 (907 aa).

Residues 26 to 317 are disordered; that stretch reads DAGMKKSSSD…KPKSMQHGFD (292 aa). 2 stretches are compositionally biased toward basic and acidic residues: residues 28–44 and 101–248; these read GMKKSSSDQVSDEEKQK and SAIE…DTDY. Basic residues predominate over residues 299–308; the sequence is KGGRKGKLSK. A tr-type G domain is found at 406 to 575; the sequence is PRAPVVTIMG…LLQAEVLELT (170 aa). Residues 415–422 are G1; the sequence is GHVDHGKT. 415–422 contributes to the GTP binding site; it reads GHVDHGKT. Residues 440-444 are G2; it reads GITQH. Residues 461-464 are G3; the sequence is DTPG. Residues 461–465 and 515–518 each bind GTP; these read DTPGH and NKID. The tract at residues 515-518 is G4; sequence NKID. Residues 551–553 form a G5 region; the sequence is SAK.

It belongs to the TRAFAC class translation factor GTPase superfamily. Classic translation factor GTPase family. IF-2 subfamily.

It localises to the cytoplasm. Its function is as follows. One of the essential components for the initiation of protein synthesis. Protects formylmethionyl-tRNA from spontaneous hydrolysis and promotes its binding to the 30S ribosomal subunits. Also involved in the hydrolysis of GTP during the formation of the 70S ribosomal complex. The protein is Translation initiation factor IF-2 of Vibrio vulnificus (strain YJ016).